A 204-amino-acid chain; its full sequence is N-alpha-acetyltransferase 40 (204 aa).

Residues 39-202 (EIYHHLEKGL…YYILYTKSRK (164 aa)) form the N-acetyltransferase domain. Residues Tyr64, 107–109 (TVE), and Tyr118 each bind substrate. Residues 120 to 122 (IQL) and 128 to 133 (GRNVGK) each bind acetyl-CoA. Substrate is bound at residue Thr154. Asn159 contacts acetyl-CoA. Ser176 is a substrate binding site.

The protein belongs to the acetyltransferase family. NAA40 subfamily.

It localises to the cytoplasm. The protein localises to the nucleus. The enzyme catalyses N-terminal L-seryl-[histone H4] + acetyl-CoA = N-terminal N(alpha)-acetyl-L-seryl-[histone H4] + CoA + H(+). The catalysed reaction is N-terminal L-seryl-[histone H2A] + acetyl-CoA = N-terminal N(alpha)-acetyl-L-seryl-[histone H2A] + CoA + H(+). Its function is as follows. N-alpha-acetyltransferase that specifically mediates the acetylation of the N-terminal residues of histones H4 and H2A. This is N-alpha-acetyltransferase 40 from Schizosaccharomyces pombe (strain 972 / ATCC 24843) (Fission yeast).